The following is a 313-amino-acid chain: MLDKVLKIATRQSPLALWQAQYVKARLEQAHPGLKVELVPMVTRGDVILDTPLAKVGGKGLFVKELELAMLEGRADIAVHSMKDVPVEFPEGLGLVTICERDDPRDAFVSNRYASIDELPAGSVVGTSSLRRQCQLAATRPDLAIRSLRGNVGTRLSKLDNGEYDAIILAAAGLKRLQLEARIRQPLSPEQSLPAVGQGAVGIECRLDDAWTRGLLAPLNHTETAVRVRAERAMNTRLEGGCQVPIGSYAELKDGELWLRALVGAPDGSQLVRGERRGPAEQAEALGISLAEELLDNGAREILAAVYDGEAPR.

The residue at position 242 (Cys-242) is an S-(dipyrrolylmethanemethyl)cysteine.

Belongs to the HMBS family. As to quaternary structure, monomer. It depends on dipyrromethane as a cofactor.

The enzyme catalyses 4 porphobilinogen + H2O = hydroxymethylbilane + 4 NH4(+). It participates in porphyrin-containing compound metabolism; protoporphyrin-IX biosynthesis; coproporphyrinogen-III from 5-aminolevulinate: step 2/4. Its function is as follows. Tetrapolymerization of the monopyrrole PBG into the hydroxymethylbilane pre-uroporphyrinogen in several discrete steps. This Klebsiella pneumoniae subsp. pneumoniae (strain ATCC 700721 / MGH 78578) protein is Porphobilinogen deaminase.